Here is a 399-residue protein sequence, read N- to C-terminus: Acetate kinase (399 aa).

Residue Asn10 participates in Mg(2+) binding. Lys17 lines the ATP pocket. Arg91 is a substrate binding site. Residue Asp150 is the Proton donor/acceptor of the active site. ATP is bound by residues 210–214, 285–287, and 333–337; these read HLGNG, DFR, and GIGEN. Mg(2+) is bound at residue Glu387.

The protein belongs to the acetokinase family. Homodimer. Mg(2+) serves as cofactor. Requires Mn(2+) as cofactor.

The protein resides in the cytoplasm. It carries out the reaction acetate + ATP = acetyl phosphate + ADP. It participates in metabolic intermediate biosynthesis; acetyl-CoA biosynthesis; acetyl-CoA from acetate: step 1/2. Catalyzes the formation of acetyl phosphate from acetate and ATP. Can also catalyze the reverse reaction. This is Acetate kinase from Wigglesworthia glossinidia brevipalpis.